Here is a 307-residue protein sequence, read N- to C-terminus: Woronin sorting complex protein (307 aa).

3 helical membrane passes run 106 to 125 (MATYGALVSAPLGHFLIWIL), 146 to 167 (NLIVAPIQNSVYLVAMAIIAGA), and 207 to 227 (AWMPFFNLVSFFIGTYINYIT). Basic and acidic residues predominate over residues 241–264 (GDGAHGDHRHDRERERDRERERHS). The tract at residues 241 to 307 (GDGAHGDHRH…YPSLGQNPRY (67 aa)) is disordered. Over residues 266-278 (PPHGHGPSHGGRP) the composition is skewed to low complexity.

Belongs to the peroxisomal membrane protein PXMP2/4 family. Self-assembles into detergent-resistant oligomers and forms a complex with hex-1 assemblies.

Its subcellular location is the peroxisome membrane. It localises to the cell septum. Its function is as follows. Woronin sorting complex protein involved in both Woronin bodies (WB) formation and inherence. Localizes to large peroxisome membranes where it self-assembles into detergent-resistant oligomers that envelop hex-1 assemblies, producing asymmetrical nascent WBs. These structures are then delivered to the cell cortex, which permits partitioning of the nascent WB and WB inheritance. This Neurospora crassa (strain ATCC 24698 / 74-OR23-1A / CBS 708.71 / DSM 1257 / FGSC 987) protein is Woronin sorting complex protein.